The chain runs to 271 residues: OX-2 membrane glycoprotein homolog (271 aa).

An N-terminal signal peptide occupies residues 1–24 (MSSLFISLPWVAFIWLALLGAVGG). Topologically, residues 25 to 227 (ARVQGPMRGS…QGPLAHDLPA (203 aa)) are extracellular. One can recognise an Ig-like V-type domain in the interval 26–129 (RVQGPMRGSA…SCTACLEVTS (104 aa)). Cys-39 and Cys-109 are joined by a disulfide. Residues Asn-83, Asn-91, Asn-138, Asn-157, Asn-166, and Asn-208 are each glycosylated (N-linked (GlcNAc...) asparagine; by host). One can recognise an Ig-like C2-type domain in the interval 130–220 (PPTGHVQVNS…ISIPASIQGP (91 aa)). Cys-148 and Cys-202 form a disulfide bridge. A helical transmembrane segment spans residues 228 to 248 (AQGTLAGVAITLVGLFGIFAL). Over 249 to 271 (HHCRRKQGGASPTSDDMDPLSTQ) the chain is Cytoplasmic.

As to quaternary structure, interacts with human CD200R1. N-glycosylated.

The protein resides in the host cell membrane. Functionally, dramatically stimulates primary monocytes, macrophages, and dendritic cells to produce the inflammatory cytokines interleukin 1-beta, IL-6, monocyte chemoattractant protein 1, and TNF-alpha. The induction of inflammatory cytokine production potentially promotes the cytokine-mediated angiogenic proliferation of KSHV-infected cells. In Human herpesvirus 8 type P (isolate GK18) (HHV-8), this protein is OX-2 membrane glycoprotein homolog (K14).